Reading from the N-terminus, the 563-residue chain is uncharacterized protein (563 aa).

Residues 30–303 (QSIEIQPEEK…EKSPEKQVEI (274 aa)) are disordered. Residues 36–56 (PEEKPSEEKQPEEKSSEEKPK) show a composition bias toward basic and acidic residues. Polar residues predominate over residues 61-72 (SAINSEKTQKPI). 3 stretches are compositionally biased toward basic and acidic residues: residues 101-115 (TTER…DDKQ), 123-276 (ERGR…EPRP), and 282-303 (EKSP…QVEI).

It belongs to the mimivirus L41 family.

This is an uncharacterized protein from Acanthamoeba polyphaga (Amoeba).